A 382-amino-acid polypeptide reads, in one-letter code: Anhydro-N-acetylmuramic acid kinase (382 aa).

Gly-22–Asp-29 contacts ATP.

The protein belongs to the anhydro-N-acetylmuramic acid kinase family.

The enzyme catalyses 1,6-anhydro-N-acetyl-beta-muramate + ATP + H2O = N-acetyl-D-muramate 6-phosphate + ADP + H(+). It participates in amino-sugar metabolism; 1,6-anhydro-N-acetylmuramate degradation. It functions in the pathway cell wall biogenesis; peptidoglycan recycling. Functionally, catalyzes the specific phosphorylation of 1,6-anhydro-N-acetylmuramic acid (anhMurNAc) with the simultaneous cleavage of the 1,6-anhydro ring, generating MurNAc-6-P. Is required for the utilization of anhMurNAc either imported from the medium or derived from its own cell wall murein, and thus plays a role in cell wall recycling. This chain is Anhydro-N-acetylmuramic acid kinase, found in Burkholderia orbicola (strain MC0-3).